A 757-amino-acid polypeptide reads, in one-letter code: Xylosyl- and glucuronyltransferase LARGE1 (757 aa).

Residues 1–10 (MLGMCRGRRK) lie on the Cytoplasmic side of the membrane. The chain crosses the membrane as a helical; Signal-anchor for type II membrane protein span at residues 11-31 (FVAASLALIFIPALTWLYLSS). At 32–757 (ANITVKPLPL…LKYMTVDNNS (726 aa)) the chain is on the lumenal side. Residues 50-82 (AVVGAAAEHQSLELRLRDVEEHNNALRREISRT) adopt a coiled-coil conformation. The disordered stretch occupies residues 76–127 (RREISRTPRVPTHSSHPSSSRHGNQLHTHSTEEGTGDSEAKKGAAAGNSSDC). Residues 82–97 (TPRVPTHSSHPSSSRH) are compositionally biased toward low complexity. Residues N123 and N149 are each glycosylated (N-linked (GlcNAc...) asparagine). The xylosyltransferase activity stretch occupies residues 139–414 (IHIAIVCAGY…FLEYDGNLLR (276 aa)). Residues D243 and D245 each contribute to the Mn(2+) site. The N-linked (GlcNAc...) asparagine glycan is linked to N273. Residues 415 to 757 (RELFGCPSET…LKYMTVDNNS (343 aa)) are glucuronyltransferase activity. Residues D564 and D566 each coordinate Mn(2+). An N-linked (GlcNAc...) asparagine glycan is attached at N738.

The protein in the C-terminal section; belongs to the glycosyltransferase 49 family. In the N-terminal section; belongs to the glycosyltransferase 8 family. It depends on Mn(2+) as a cofactor.

It is found in the golgi apparatus membrane. The catalysed reaction is 3-O-[beta-D-GlcA-(1-&gt;3)-beta-D-Xyl-(1-&gt;4)-Rib-ol-P-Rib-ol-P-3-beta-D-GalNAc-(1-&gt;3)-beta-D-GlcNAc-(1-&gt;4)-(O-6-P-alpha-D-Man)]-Thr-[protein] + UDP-alpha-D-xylose = 3-O-[alpha-D-Xyl-(1-&gt;3)-beta-D-GlcA-(1-&gt;4)-beta-D-Xyl-(1-&gt;4)-Rib-ol-P-Rib-ol-P-3-beta-D-GalNAc-(1-&gt;3)-beta-D-GlcNAc-(1-&gt;4)-(O-6-P-alpha-D-Man)]-Thr-[protein] + UDP + H(+). It catalyses the reaction 3-O-{(1-&gt;[3)-alpha-D-Xyl-(1-&gt;3)-beta-D-GlcA-(1-&gt;](n)-4)-beta-D-Xyl-(1-&gt;4)-Rib-ol-P-Rib-ol-P-3-beta-D-GalNAc-(1-&gt;3)-beta-D-GlcNAc-(1-&gt;4)-O-6-P-alpha-D-Man}-L-Thr-[protein] + UDP-alpha-D-glucuronate = 3-O-{beta-D-GlcA-(1-&gt;[3)-alpha-D-Xyl-(1-&gt;3)-beta-D-GlcA-(1-&gt;](n)-4)-beta-D-Xyl-(1-&gt;4)-Rib-ol-P-Rib-ol-P-3-beta-D-GalNAc-(1-&gt;3)-beta-D-GlcNAc-(1-&gt;4)-O-6-P-alpha-D-Man}-L-Thr-[protein] + UDP + H(+). The enzyme catalyses 3-O-{beta-D-GlcA-(1-&gt;[3)-alpha-D-Xyl-(1-&gt;3)-beta-D-GlcA-(1-&gt;](n)-4)-beta-D-Xyl-(1-&gt;4)-Rib-ol-P-Rib-ol-P-3-beta-D-GalNAc-(1-&gt;3)-beta-D-GlcNAc-(1-&gt;4)-O-6-P-alpha-D-Man}-L-Thr-[protein] + UDP-alpha-D-xylose = 3-O-{(1-&gt;[3)-alpha-D-Xyl-(1-&gt;3)-beta-D-GlcA-(1-&gt;](n+1)-4)-beta-D-Xyl-(1-&gt;4)-Rib-ol-P-Rib-ol-P-3-beta-D-GalNAc-(1-&gt;3)-beta-D-GlcNAc-(1-&gt;4)-O-6-P-alpha-D-Man}-L-Thr-[protein] + UDP + H(+). It participates in protein modification; protein glycosylation. Bifunctional glycosyltransferase with both alpha-1,3-xylosyltransferase and beta-1,3-glucuronyltransferase activities involved in the maturation of alpha-dystroglycan (DAG1) by glycosylation leading to DAG1 binding to laminin G-like domain-containing extracellular proteins with high affinity. Elongates the glucuronyl-beta-1,4-xylose-beta disaccharide primer structure initiated by B4GAT1 by adding repeating units [-3-Xylose-alpha-1,3-GlcA-beta-1-] to produce a heteropolysaccharide. Requires the phosphorylation of core M3 (O-mannosyl trisaccharide) by POMK to elongate the glucuronyl-beta-1,4-xylose-beta disaccharide primer. Plays a key role in skeletal muscle function and regeneration. The protein is Xylosyl- and glucuronyltransferase LARGE1 of Danio rerio (Zebrafish).